Here is a 186-residue protein sequence, read N- to C-terminus: Putative 5'(3')-deoxyribonucleotidase (186 aa).

It belongs to the 5'(3')-deoxyribonucleotidase family. The cofactor is Mg(2+).

Functionally, dephosphorylates the 5' and 2'(3')-phosphates of deoxyribonucleotides. This chain is Putative 5'(3')-deoxyribonucleotidase, found in Bordetella parapertussis (strain 12822 / ATCC BAA-587 / NCTC 13253).